The following is an 885-amino-acid chain: Probable LRR receptor-like serine/threonine-protein kinase At1g51820 (885 aa).

The first 20 residues, 1–20 (MERHFVFIATYLLIFHLVQA), serve as a signal peptide directing secretion. Residues 21–509 (QNQTGFISVD…GHKKKSVIVP (489 aa)) are Extracellular-facing. Residues asparagine 22, asparagine 93, asparagine 135, asparagine 194, asparagine 228, asparagine 250, asparagine 254, asparagine 281, asparagine 287, asparagine 424, asparagine 437, asparagine 456, and asparagine 461 are each glycosylated (N-linked (GlcNAc...) asparagine). LRR repeat units lie at residues 403 to 424 (IITS…AIKN), 427 to 447 (HLQI…EFLA), and 451 to 473 (SLLV…LLQK). Residues 510–530 (VVASIASIAVLIGALVLFLIL) form a helical membrane-spanning segment. The Cytoplasmic portion of the chain corresponds to 531-885 (RKKRSPKVEG…FGTEVSPNAR (355 aa)). In terms of domain architecture, Protein kinase spans 578–851 (NNFQRILGKG…QVVIELNECL (274 aa)). ATP is bound by residues 584-592 (LGKGGFGMV) and lysine 606. Tyrosine 651 is modified (phosphotyrosine). Aspartate 703 functions as the Proton acceptor in the catalytic mechanism. Serine 737 carries the post-translational modification Phosphoserine. Phosphothreonine occurs at positions 738 and 743. Tyrosine 751 bears the Phosphotyrosine mark.

Belongs to the protein kinase superfamily. Ser/Thr protein kinase family.

It localises to the membrane. The catalysed reaction is L-seryl-[protein] + ATP = O-phospho-L-seryl-[protein] + ADP + H(+). It carries out the reaction L-threonyl-[protein] + ATP = O-phospho-L-threonyl-[protein] + ADP + H(+). This is Probable LRR receptor-like serine/threonine-protein kinase At1g51820 from Arabidopsis thaliana (Mouse-ear cress).